Reading from the N-terminus, the 74-residue chain is uncharacterized protein (74 aa).

Residues 55 to 74 (DENSESESKDGASWFKVYRG) form a disordered region.

This is an uncharacterized protein from Listeria innocua serovar 6a (strain ATCC BAA-680 / CLIP 11262).